The chain runs to 466 residues: Probable agmatine/putrescine antiporter AguD (466 aa).

The next 12 helical transmembrane spans lie at 8–28 (FSLFSAILSVICVVFVAEAAA), 30–50 (VAAIGNSQFFWWIVLIVAFLL), 85–105 (ASWFYWVNFPLWMASLAVLCP), 120–140 (ISLLIELIFIWVIVLISLYPV), 144–164 (VWILNGGAVIKVFLALALGGL), 192–212 (LSFISVIIFNLLGFEVICTFA), 226–246 (IIIGGIVIAAIYMFSAFGIGV), 273–293 (WFISLIAFLFMLTLVGNMVSW), 325–345 (WGAALMNGIVATFIVVIAPLL), 350–370 (LFWSFFSLNLVLFLLSYIPVF), 398–418 (VYMALPMIIIIISLIFTAIPL), and 426–446 (TEQLPITIGAIIFIVIGELII).

The protein belongs to the amino acid-polyamine-organocation (APC) superfamily. Glutamate:GABA antiporter (GGA) (TC 2.A.3.7) family.

It is found in the cell membrane. In terms of biological role, probably catalyzes agmatine/putrescine exchange. This chain is Probable agmatine/putrescine antiporter AguD, found in Lactococcus lactis subsp. lactis (strain IL1403) (Streptococcus lactis).